The chain runs to 660 residues: Elongation factor 4 (660 aa).

The tr-type G domain occupies 55–241; that stretch reads AQIRNFCIIA…EVVRQVPPPQ (187 aa). Residues 67–72 and 188–191 each bind GTP; these read DHGKST and NKID.

The protein belongs to the TRAFAC class translation factor GTPase superfamily. Classic translation factor GTPase family. LepA subfamily.

It localises to the cell membrane. The catalysed reaction is GTP + H2O = GDP + phosphate + H(+). Required for accurate and efficient protein synthesis under certain stress conditions. May act as a fidelity factor of the translation reaction, by catalyzing a one-codon backward translocation of tRNAs on improperly translocated ribosomes. Back-translocation proceeds from a post-translocation (POST) complex to a pre-translocation (PRE) complex, thus giving elongation factor G a second chance to translocate the tRNAs correctly. Binds to ribosomes in a GTP-dependent manner. In Mycolicibacterium paratuberculosis (strain ATCC BAA-968 / K-10) (Mycobacterium paratuberculosis), this protein is Elongation factor 4.